A 654-amino-acid polypeptide reads, in one-letter code: Probable Xaa-Pro aminopeptidase P (654 aa).

Residues Asp449, Asp460, Glu558, and Glu572 each contribute to the Mn(2+) site.

Belongs to the peptidase M24B family. Requires Mn(2+) as cofactor.

It carries out the reaction Release of any N-terminal amino acid, including proline, that is linked to proline, even from a dipeptide or tripeptide.. Functionally, catalyzes the removal of a penultimate prolyl residue from the N-termini of peptides. This is Probable Xaa-Pro aminopeptidase P (ampp) from Aspergillus flavus (strain ATCC 200026 / FGSC A1120 / IAM 13836 / NRRL 3357 / JCM 12722 / SRRC 167).